We begin with the raw amino-acid sequence, 1133 residues long: MSHAPRYAELRCKSCFSFLEGASHPEELVGRAAELGLSALALADVNGLYGIVRAHAEAKRQGLPLIVGAELVVAGLAPGRPARLVLLAQDREGYAGLCRLVTRAHCGEGWTGAPERRERDAVAVPFEAVAAGARGLFALYPGADGDAVARLKDAFGRRAALAVARHRVAGEEARVLAARSAGRRLGVPVAVTNDVHTHARARQVLQDVLTCVRHGTTVDRAGRRLFPNAERTLKGPEELARLWSDFPEGLAAAADIADQCRFRMEAIRGEHPLPPVVVERGALAGGVEVATSSPAQAAREGARTATPSLSLRASLPAERPAAPAIEGCAASGPGLPAAGAGGGAAAAAATDRDGALAGMSLLRELVREGARWRYGGEPPEDVARQLARELELVESLGYASYFLTVWDVVRFARSRGILCQGRGSAANSAVCYVLGITSIDPVRMGLLFERFISAERGEPPDIDVDFEHERREEVLQYVYQRYGRDRAGMVCEVITYRGKSALRDVGKALGLSLGQVDRLAKLIGTYEDLGQVGPELLAQAGLDAADSERVRMTLALARELQGFPRHLSIHVGGFVITRRPLCETVPIEPAAMPGRTIVQWDKDDLAELDLLKVDLLGLGMLTALSRALALLARHRPAPASPTAVPHPDALATIPAEDPEVYEMLGRADSIGVFQVESRAQMSLAPRLRPRNFYDLVISVAIIRPGPIQGGMIHPYLRRRDGKEQVRYPYAPLEPVLARTLGVPLFQEQAMRLAVIAAGFTPGEADELRRVMTHRRSHEKLAAMKARLVAGMAERGISGADAEEIFKQLLGFAGYGFPESHAASFALLVYASAWLKRYHPAAFACALLNSQPMGFYAPHTLVEDAKRHGVEVRGVDVGCSGWESSLEGAAPGRPAAPGETAVLRVGLHAVRGLPRAVGEAILEARAAGPFGSVAELVRRARLSRAWLVRLAEAGALGALAPDRRDAVWRSLAVEADGGDLFAGLAPPEPEVALPAASAADEVSADFATTGLSVRGHPMALVRPGLGGDRIRTARELGRLPDRAPVEVAGLVIVRQRPETARGIVFVSLEDETGIANLVVMPDVYERFRPVVRGAPFLLARGRVERSGKVVNVRVDSVAPLALAPATGARARDFH.

The protein belongs to the DNA polymerase type-C family. DnaE2 subfamily.

It is found in the cytoplasm. It catalyses the reaction DNA(n) + a 2'-deoxyribonucleoside 5'-triphosphate = DNA(n+1) + diphosphate. Functionally, DNA polymerase involved in damage-induced mutagenesis and translesion synthesis (TLS). It is not the major replicative DNA polymerase. This is Error-prone DNA polymerase from Anaeromyxobacter sp. (strain K).